We begin with the raw amino-acid sequence, 172 residues long: Lytic chitin monooxygenase (172 aa).

The signal sequence occupies residues 1–30; it reads MHAGRKTAVLIGAALAPVIAVSLPAASASA. 2 residues coordinate Cu cation: histidine 31 and histidine 106. The Chitin-binding type-4 domain occupies 31-168; it reads HGYISNPPSR…DNAFYACIDV (138 aa).

Cu(2+) is required as a cofactor.

It localises to the secreted. The enzyme catalyses [(1-&gt;4)-N-acetyl-beta-D-glucosaminyl]n+m + reduced acceptor + O2 = [(1-&gt;4)-N-acetyl-beta-D-glucosaminyl]m-1-(1-&gt;4)-2-(acetylamino)-2-deoxy-D-glucono-1,5-lactone + [(1-&gt;4)-N-acetyl-beta-D-glucosaminyl]n + acceptor + H2O.. It participates in glycan degradation; chitin degradation. Its function is as follows. Involved in chitin degradation. Catalyzes the oxidative cleavage of glycosidic bonds in chitin via a copper-dependent mechanism, leading to oxidized chitooligomers with degrees of polymerization of 4-6. Is not active on cellulose. The sequence is that of Lytic chitin monooxygenase from Streptomyces ambofaciens (strain ATCC 23877 / 3486 / DSM 40053 / JCM 4204 / NBRC 12836 / NRRL B-2516).